The primary structure comprises 401 residues: Probable sodium/metabolite cotransporter BASS5, chloroplastic (401 aa).

Residues 1–46 (MAPNAAVLVRPHIAGVHHLPTGRRLPRLAPPQAVSPPFSRQKGSVV) constitute a chloroplast transit peptide. The next 9 helical transmembrane spans lie at 93 to 113 (TIIP…PPSF), 122 to 142 (APAL…KDFI), 159 to 179 (FIIK…IFNL), 185 to 205 (AGIM…ATFL), 215 to 235 (IVMT…LSYF), 247 to 267 (GMMS…LLLN), 273 to 293 (LCSA…ALCV), 299 to 319 (INIK…LFAF), and 372 to 392 (LVGV…FALV).

This sequence belongs to the bile acid:sodium symporter (BASS) (TC 2.A.28) family.

It is found in the membrane. The protein resides in the plastid. It localises to the chloroplast envelope. Functionally, may function as sodium-coupled metabolite transporter across the chloroplast envelope. This Oryza sativa subsp. indica (Rice) protein is Probable sodium/metabolite cotransporter BASS5, chloroplastic (BASS5).